Reading from the N-terminus, the 614-residue chain is Dihydroxy-acid dehydratase (614 aa).

Asp-81 lines the Mg(2+) pocket. [2Fe-2S] cluster is bound at residue Cys-122. Asp-123 and Lys-124 together coordinate Mg(2+). Lys-124 is subject to N6-carboxylysine. A [2Fe-2S] cluster-binding site is contributed by Cys-195. A Mg(2+)-binding site is contributed by Glu-491. The active-site Proton acceptor is the Ser-517.

Belongs to the IlvD/Edd family. As to quaternary structure, homodimer. It depends on [2Fe-2S] cluster as a cofactor. Requires Mg(2+) as cofactor.

The catalysed reaction is (2R)-2,3-dihydroxy-3-methylbutanoate = 3-methyl-2-oxobutanoate + H2O. It carries out the reaction (2R,3R)-2,3-dihydroxy-3-methylpentanoate = (S)-3-methyl-2-oxopentanoate + H2O. The protein operates within amino-acid biosynthesis; L-isoleucine biosynthesis; L-isoleucine from 2-oxobutanoate: step 3/4. It functions in the pathway amino-acid biosynthesis; L-valine biosynthesis; L-valine from pyruvate: step 3/4. Its function is as follows. Functions in the biosynthesis of branched-chain amino acids. Catalyzes the dehydration of (2R,3R)-2,3-dihydroxy-3-methylpentanoate (2,3-dihydroxy-3-methylvalerate) into 2-oxo-3-methylpentanoate (2-oxo-3-methylvalerate) and of (2R)-2,3-dihydroxy-3-methylbutanoate (2,3-dihydroxyisovalerate) into 2-oxo-3-methylbutanoate (2-oxoisovalerate), the penultimate precursor to L-isoleucine and L-valine, respectively. The chain is Dihydroxy-acid dehydratase from Rhodopseudomonas palustris (strain BisA53).